Consider the following 425-residue polypeptide: Keratin, type II cytoskeletal I (425 aa).

The segment at 1–16 (FLEQQNKVLETKWKLL) is coil 1A. Positions 1–296 (FLEQQNKVLE…YMLEGEEGRI (296 aa)) constitute an IF rod domain. The segment at 17–37 (QEQGTKGTTKRANLDPLFEKY) is linker 1. The interval 38–129 (IADLKKYLDN…TRDAAELSQV (92 aa)) is coil 1B. The tract at residues 130–153 (HDQVTDTSVVLTMDNNRDLNLDSI) is linker 12. Residues 154 to 292 (IKEVKCQYEQ…STYRYMLEGE (139 aa)) are coil 2. A tail region spans residues 293–425 (EGRISGQIVN…STTSTTKKTY (133 aa)).

It belongs to the intermediate filament family. Heterotetramer of two type I and two type II keratins.

The sequence is that of Keratin, type II cytoskeletal I from Xenopus laevis (African clawed frog).